A 619-amino-acid chain; its full sequence is Auxin efflux carrier component 7 (619 aa).

Residues 1-7 (MITWHDL) are Extracellular-facing. A helical membrane pass occupies residues 8 to 28 (YTVLTAVIPLYVAMILAYGSV). Over 29-38 (RWWKIFSPDQ) the chain is Cytoplasmic. A helical transmembrane segment spans residues 39–59 (CSGINRFVAIFAVPLLSFHFI). Valine 51 is a binding site for (indol-3-yl)acetate. The Extracellular segment spans residues 60-71 (SSNNPYAMNLRF). The helical transmembrane segment at 72 to 92 (IAADTLQKLIMLTLLIIWANF) threads the bilayer. Over 93-101 (TRSGSLEWS) the chain is Cytoplasmic. Residues 102 to 122 (ITIFSLSTLPNTLVMGIPLLI) form a helical membrane-spanning segment. Residues asparagine 112 and leucine 114 each contribute to the (indol-3-yl)acetate site. Residues 123–131 (AMYGEYSGS) are Extracellular-facing. A helical transmembrane segment spans residues 132–152 (LMVQIVVLQCIIWYTLLLFLF). A (indol-3-yl)acetate-binding site is contributed by tyrosine 145. Over 153–479 (EYRGAKILIM…LIRNPNTYSS (327 aa)) the chain is Cytoplasmic. Phosphoserine occurs at positions 229, 246, and 286. The interval 306 to 340 (GAPGSYPAPNPEFSTGNKTGSKAPKENHHHVGKSN) is disordered. Phosphothreonine is present on threonine 320. Serine 357 bears the Phosphoserine mark. A disordered region spans residues 393–413 (HTQNGENKAGPMNGDYGGEEE). Residues 480–500 (LIGLIWALVAFRWDVAMPKII) form a helical membrane-spanning segment. The Extracellular segment spans residues 501 to 503 (QQS). Residues 504–524 (ISILSDAGLGMAMFSLGLFMA) form a helical membrane-spanning segment. Topologically, residues 525-538 (LQPKLIACGNSTAT) are cytoplasmic. The chain crosses the membrane as a helical span at residues 539–559 (FAMAVRFFTGPAVMAVAAMAI). Topologically, residues 560-564 (GLRGD) are extracellular. A helical membrane pass occupies residues 565–585 (LLRVAIVQAALPQGIVPFVFA). (indol-3-yl)acetate-binding residues include isoleucine 579 and valine 580. Residues 586-598 (KEYNVHPAILSTG) lie on the Cytoplasmic side of the membrane. A helical membrane pass occupies residues 599-619 (VIFGMLIALPITLVYYILLGL).

It belongs to the auxin efflux carrier (TC 2.A.69.1) family. In terms of assembly, homodimer.

Its subcellular location is the cell membrane. Its function is as follows. Acts as a component of the auxin efflux carrier. Mediates the initial auxin gradient which contributes to the establishment of the apical-basal axis in early embryogenesis. Together with PIN3 and PIN4, involved in the connective auxin transport (CAT) that ensures communication across the shoot system, and modulates strigolactone-mediated shoot branching control. The abcb19 pin3 pin4 pin7 quadruple mutant exhibits an additive phenotype on strigolactone-mediated bud outgrowth responses and shoot branching control. The polypeptide is Auxin efflux carrier component 7 (Arabidopsis thaliana (Mouse-ear cress)).